Consider the following 553-residue polypeptide: Arginine--tRNA ligase (553 aa).

Positions 132–140 (PTGDLHIGH) match the 'HIGH' region motif.

Belongs to the class-I aminoacyl-tRNA synthetase family. In terms of assembly, monomer.

Its subcellular location is the cytoplasm. The enzyme catalyses tRNA(Arg) + L-arginine + ATP = L-arginyl-tRNA(Arg) + AMP + diphosphate. The protein is Arginine--tRNA ligase of Staphylococcus aureus (strain N315).